Consider the following 92-residue polypeptide: UPF0213 protein MGAS9429_Spy1198 (92 aa).

Residues 4–80 (KKAYMYVLEC…KRKTRSQKLA (77 aa)) enclose the GIY-YIG domain.

The protein belongs to the UPF0213 family.

This is UPF0213 protein MGAS9429_Spy1198 from Streptococcus pyogenes serotype M12 (strain MGAS9429).